A 399-amino-acid polypeptide reads, in one-letter code: Glutathione-independent formaldehyde dehydrogenase (399 aa).

Cys47 provides a ligand contact to Zn(2+). Residues Gly48, Ser49, and His52 each contribute to the NAD(+) site. Positions 68, 98, 101, 104, 112, and 170 each coordinate Zn(2+). Val198, Asp218, Arg223, Val263, Arg268, Pro300, Gln338, and Thr339 together coordinate NAD(+).

It belongs to the zinc-containing alcohol dehydrogenase family. Homotetramer. Requires Zn(2+) as cofactor.

It catalyses the reaction formaldehyde + NAD(+) + H2O = formate + NADH + 2 H(+). The catalysed reaction is acetaldehyde + NAD(+) + H2O = acetate + NADH + 2 H(+). In terms of biological role, dehydrogenase that catalyzes the NAD(+)-dependent oxidation of formaldehyde and acetaldehyde. Shows no detectable activity against either aldehydes with longer carbon chains or ethanol. The chain is Glutathione-independent formaldehyde dehydrogenase from Pseudomonas aeruginosa (strain LESB58).